Consider the following 264-residue polypeptide: Thymidylate synthase (264 aa).

Residue Arg-21 coordinates dUMP. His-51 lines the (6R)-5,10-methylene-5,6,7,8-tetrahydrofolate pocket. DUMP is bound at residue 126–127; that stretch reads RR. Cys-146 (nucleophile) is an active-site residue. DUMP contacts are provided by residues 166 to 169, Asn-177, and 207 to 209; these read RSCD and HLY. Asp-169 serves as a coordination point for (6R)-5,10-methylene-5,6,7,8-tetrahydrofolate. Residue Ala-263 participates in (6R)-5,10-methylene-5,6,7,8-tetrahydrofolate binding.

It belongs to the thymidylate synthase family. Bacterial-type ThyA subfamily. In terms of assembly, homodimer.

The protein localises to the cytoplasm. It catalyses the reaction dUMP + (6R)-5,10-methylene-5,6,7,8-tetrahydrofolate = 7,8-dihydrofolate + dTMP. It participates in pyrimidine metabolism; dTTP biosynthesis. In terms of biological role, catalyzes the reductive methylation of 2'-deoxyuridine-5'-monophosphate (dUMP) to 2'-deoxythymidine-5'-monophosphate (dTMP) while utilizing 5,10-methylenetetrahydrofolate (mTHF) as the methyl donor and reductant in the reaction, yielding dihydrofolate (DHF) as a by-product. This enzymatic reaction provides an intracellular de novo source of dTMP, an essential precursor for DNA biosynthesis. The chain is Thymidylate synthase from Hamiltonella defensa subsp. Acyrthosiphon pisum (strain 5AT).